Here is a 377-residue protein sequence, read N- to C-terminus: NAC domain-containing protein 76 (377 aa).

The NAC domain occupies 10–159; that stretch reads VPPGFRFHPT…GWVVCRAFKK (150 aa). Residues 110 to 165 mediate DNA binding; the sequence is IGMRKTLVFYKGRAPNGQKTDWIMHEYRLESDENAPPQEEGWVVCRAFKKKPMTGQ. The disordered stretch occupies residues 312-347; the sequence is GVSGFGGHHEEDNNKIGHYNNEESNNKGSVETASST. Residues 318–336 are compositionally biased toward basic and acidic residues; sequence GHHEEDNNKIGHYNNEESN. Positions 337–347 are enriched in polar residues; the sequence is NKGSVETASST.

This sequence belongs to the plant vascular related NAC-domain protein family. In terms of assembly, interacts with NAC030/VND7. In terms of tissue distribution, detected in root protoxylem and metaxylem poles and in vessels of protoxylems, outermost metaxylems, inner metaxylems, shoots and hypocotyls. Expressed in roots, hypocotyls, cotyledons and leaves. Present in developing xylems. Specifically expressed in vessels but not in interfascicular fibers in stems.

It localises to the nucleus. Its function is as follows. Transcription activator that binds to the secondary wall NAC binding element (SNBE), 5'-(T/A)NN(C/T)(T/C/G)TNNNNNNNA(A/C)GN(A/C/T)(A/T)-3', in the promoter of target genes. Involved in xylem formation by promoting the expression of secondary wall-associated transcription factors and of genes involved in secondary wall biosynthesis and programmed cell death, genes driven by the secondary wall NAC binding element (SNBE). Triggers thickening of secondary walls. In Arabidopsis thaliana (Mouse-ear cress), this protein is NAC domain-containing protein 76.